The following is a 443-amino-acid chain: Transcriptional adapter 2-alpha (443 aa).

Ser-6 bears the Phosphoserine mark. A ZZ-type zinc finger spans residues 12–69 (SDKPPCRGCSSYLMEPYIKCAECGPPPFFLCLQCFTRGFEYKKHQSDHTYEIMTSDFP). Zn(2+)-binding residues include Cys-17, Cys-20, Cys-31, Cys-34, Cys-42, Cys-45, His-55, and His-59. Residues 70–122 (VLDPSWTAQEEMALLEAVMDCGFGNWQDVANQMCTKTKEECEKHYMKHFINNP) enclose the SANT domain. Residues Lys-132 and Lys-138 each participate in a glycyl lysine isopeptide (Lys-Gly) (interchain with G-Cter in SUMO2) cross-link. The segment covering 347-359 (LSPSVPMTSNSGR) has biased composition (polar residues). The disordered stretch occupies residues 347–372 (LSPSVPMTSNSGRRSAPPLNLTGLPG). Positions 356–443 (NSGRRSAPPL…LIREGYITKA (88 aa)) constitute an SWIRM domain. A DNA-binding region spans residues 426–435 (KTRKIYDFLI).

In terms of assembly, interacts with GCN5 and NR3C1. Associated with the P/CAF protein in the PCAF complex. Component of the PCAF complex, at least composed of TADA2L/ADA2, TADA3L/ADA3, TAF5L/PAF65-beta, TAF6L/PAF65-alpha, TAF10/TAFII30, TAF12/TAFII20, TAF9/TAFII31 and TRRAP. Component of the ADA2A-containing complex (ATAC), composed of KAT14, KAT2A, TADA2L, TADA3L, ZZ3, MBIP, WDR5, YEATS2, CCDC101 and DR1. Interacts with CCDC134.

It localises to the nucleus. The protein localises to the chromosome. In terms of biological role, component of the ATAC complex, a complex with histone acetyltransferase activity on histones H3 and H4. Required for the function of some acidic activation domains, which activate transcription from a distant site. Binds double-stranded DNA. Binds dinucleosomes, probably at the linker region between neighboring nucleosomes. Plays a role in chromatin remodeling. May promote TP53/p53 'Lys-321' acetylation, leading to reduced TP53 stability and transcriptional activity. May also promote XRCC6 acetylation thus facilitating cell apoptosis in response to DNA damage. The chain is Transcriptional adapter 2-alpha (TADA2A) from Bos taurus (Bovine).